Here is a 221-residue protein sequence, read N- to C-terminus: ATP phosphoribosyltransferase (221 aa).

This sequence belongs to the ATP phosphoribosyltransferase family. Short subfamily. Heteromultimer composed of HisG and HisZ subunits.

The protein localises to the cytoplasm. It catalyses the reaction 1-(5-phospho-beta-D-ribosyl)-ATP + diphosphate = 5-phospho-alpha-D-ribose 1-diphosphate + ATP. The protein operates within amino-acid biosynthesis; L-histidine biosynthesis; L-histidine from 5-phospho-alpha-D-ribose 1-diphosphate: step 1/9. Catalyzes the condensation of ATP and 5-phosphoribose 1-diphosphate to form N'-(5'-phosphoribosyl)-ATP (PR-ATP). Has a crucial role in the pathway because the rate of histidine biosynthesis seems to be controlled primarily by regulation of HisG enzymatic activity. The sequence is that of ATP phosphoribosyltransferase from Carboxydothermus hydrogenoformans (strain ATCC BAA-161 / DSM 6008 / Z-2901).